We begin with the raw amino-acid sequence, 482 residues long: Alpha-ketoglutarate semialdehyde dehydrogenase (482 aa).

Positions 1-28 (MTDPSKNYVNGEWVTSETGETTEVTNPA) are disordered. The span at 11–25 (GEWVTSETGETTEVT) shows a compositional bias: low complexity. Cys284 is a catalytic residue.

It belongs to the aldehyde dehydrogenase family. Homotetramer.

The enzyme catalyses 2,5-dioxopentanoate + NADP(+) + H2O = 2-oxoglutarate + NADPH + 2 H(+). It functions in the pathway carbohydrate metabolism; D-xylose degradation. In terms of biological role, alpha-ketoglutarate semialdehyde dehydrogenase involved in the degradation of D-xylose, a major component of hemicelluloses such as xylan. Catalyzes the fifth reaction in the xylose utilization pathway through dehydratation of alpha-ketoglutarate semialdehyde (2,5-dioxopentanoate) into alpha-ketoglutarate. The chain is Alpha-ketoglutarate semialdehyde dehydrogenase from Haloferax volcanii (strain ATCC 29605 / DSM 3757 / JCM 8879 / NBRC 14742 / NCIMB 2012 / VKM B-1768 / DS2) (Halobacterium volcanii).